The sequence spans 132 residues: Fatty acid-binding protein, brain (132 aa).

Val2 carries the post-translational modification N-acetylvaline. Residue 127–129 participates in a fatty acid binding; the sequence is RHY.

The protein belongs to the calycin superfamily. Fatty-acid binding protein (FABP) family.

The protein localises to the cytoplasm. Its function is as follows. FABPs are thought to play a role in the intracellular transport of long-chain fatty acids and their acyl-CoA esters. This Gallus gallus (Chicken) protein is Fatty acid-binding protein, brain (FABP7).